A 398-amino-acid chain; its full sequence is Subtilisin-like serine protease EN45_076310 (398 aa).

Residues 1–19 (MGFLKLLSTSLATLAVVNA) form the signal peptide. A propeptide spans 20-115 (GKLLTANDGD…VEPDMVVNAT (96 aa)) (removed in mature form). The region spanning 35–113 (SYIVVMNDGV…KYVEPDMVVN (79 aa)) is the Inhibitor I9 domain. N-linked (GlcNAc...) asparagine glycosylation is present at Asn113. Residues 124–134 (PSWGLSRISSK) are igE-binding. A Peptidase S8 domain is found at 125 to 398 (SWGLSRISSK…KLLYNGINAQ (274 aa)). Residue Asp157 is the Charge relay system of the active site. The tract at residues 163–170 (GHADFGGR) is igE-binding. The tract at residues 175–195 (TNTADNDDTDGNGHGTHTAST) is disordered. The active-site Charge relay system is the His188. The segment at 227–245 (IAGMDWAVKDSKSRGATGK) is igE-binding. An N-linked (GlcNAc...) asparagine glycan is attached at Asn249. An igE-binding region spans residues 310 to 318 (SFTNFGSVV). Residue Ser343 is the Charge relay system of the active site.

Belongs to the peptidase S8 family.

It localises to the secreted. Its activity is regulated as follows. Inhibited by phenylmethanesulfonyl fluoride (PMSF) and diethyl pyrocarbonate (DEPC), but not by benzamidine. Serine protease that hydrolyzes casein, gelatin and human collagen type IV, but not elastin in vitro. Hydrolyzes OCLN of the human lung epithelial cells at 202-Gln-|-Ser-203 and Gln-211-|-Ile-212. The protein is Subtilisin-like serine protease EN45_076310 of Penicillium chrysogenum (Penicillium notatum).